The following is a 311-amino-acid chain: Pyrimidine-specific ribonucleoside hydrolase RihA (311 aa).

Residue histidine 240 is part of the active site.

This sequence belongs to the IUNH family. RihA subfamily.

Hydrolyzes cytidine or uridine to ribose and cytosine or uracil, respectively. The sequence is that of Pyrimidine-specific ribonucleoside hydrolase RihA from Salmonella typhimurium (strain LT2 / SGSC1412 / ATCC 700720).